A 119-amino-acid chain; its full sequence is Venom allergen 2 (119 aa).

Belongs to the ant venom allergen 2/4 family. As to quaternary structure, homodimer; disulfide-linked. Expressed by the venom gland.

It localises to the secreted. The chain is Venom allergen 2 from Solenopsis richteri (Black imported fire ant).